Consider the following 526-residue polypeptide: Bifunctional purine biosynthesis protein PurH (526 aa).

Residues 1–147 form the MGS-like domain; the sequence is MSVIKRALIS…KNWKHVAIVT (147 aa).

This sequence belongs to the PurH family.

It catalyses the reaction (6R)-10-formyltetrahydrofolate + 5-amino-1-(5-phospho-beta-D-ribosyl)imidazole-4-carboxamide = 5-formamido-1-(5-phospho-D-ribosyl)imidazole-4-carboxamide + (6S)-5,6,7,8-tetrahydrofolate. It carries out the reaction IMP + H2O = 5-formamido-1-(5-phospho-D-ribosyl)imidazole-4-carboxamide. It functions in the pathway purine metabolism; IMP biosynthesis via de novo pathway; 5-formamido-1-(5-phospho-D-ribosyl)imidazole-4-carboxamide from 5-amino-1-(5-phospho-D-ribosyl)imidazole-4-carboxamide (10-formyl THF route): step 1/1. Its pathway is purine metabolism; IMP biosynthesis via de novo pathway; IMP from 5-formamido-1-(5-phospho-D-ribosyl)imidazole-4-carboxamide: step 1/1. The sequence is that of Bifunctional purine biosynthesis protein PurH from Neisseria gonorrhoeae (strain NCCP11945).